The sequence spans 131 residues: Interleukin-13 (131 aa).

The N-terminal stretch at 1 to 18 (MALWVTAVLALACLGGLA) is a signal peptide. Residues Asn42, Asn52, and Asn75 are each glycosylated (N-linked (GlcNAc...) asparagine). 2 disulfides stabilise this stretch: Cys51/Cys79 and Cys67/Cys93.

The protein belongs to the IL-4/IL-13 family. Interacts with IL13RA2.

The protein localises to the secreted. In terms of biological role, cytokine that plays important roles in allergic inflammation and immune response to parasite infection. Synergizes with IL2 in regulating interferon-gamma synthesis. Stimulates B-cell proliferation, and activation of eosinophils, basophils, and mast cells. Plays an important role in controlling IL33 activity by modulating the production of transmembrane and soluble forms of interleukin-1 receptor-like 1/IL1RL1. Displays the capacity to antagonize Th1-driven proinflammatory immune response and downregulates synthesis of many proinflammatory cytokines including IL1, IL6, IL10, IL12 and TNF-alpha through a mechanism that partially involves suppression of NF-kappa-B. Also functions on nonhematopoietic cells, including endothelial cells where it induces vascular cell adhesion protein 1/VCAM1, which is important in the recruitment of eosinophils. Exerts its biological effects through its receptors which comprises the IL4R chain and the IL13RA1 chain, to activate JAK1 and TYK2, leading to the activation of STAT6. Aside from IL13RA1, another receptor IL13RA2 acts as a high affinity decoy for IL13 and mediates internalization and depletion of extracellular IL13. The protein is Interleukin-13 (Il13) of Mus musculus (Mouse).